A 243-amino-acid polypeptide reads, in one-letter code: Pyridoxine 5'-phosphate synthase (243 aa).

Asn-9 lines the 3-amino-2-oxopropyl phosphate pocket. 11-12 (DH) provides a ligand contact to 1-deoxy-D-xylulose 5-phosphate. Arg-20 contacts 3-amino-2-oxopropyl phosphate. His-45 serves as the catalytic Proton acceptor. The 1-deoxy-D-xylulose 5-phosphate site is built by Arg-47 and His-52. Glu-72 (proton acceptor) is an active-site residue. Residue Thr-102 coordinates 1-deoxy-D-xylulose 5-phosphate. His-193 functions as the Proton donor in the catalytic mechanism. Residues Gly-194 and 215–216 (GH) contribute to the 3-amino-2-oxopropyl phosphate site.

This sequence belongs to the PNP synthase family. As to quaternary structure, homooctamer; tetramer of dimers.

Its subcellular location is the cytoplasm. It carries out the reaction 3-amino-2-oxopropyl phosphate + 1-deoxy-D-xylulose 5-phosphate = pyridoxine 5'-phosphate + phosphate + 2 H2O + H(+). The protein operates within cofactor biosynthesis; pyridoxine 5'-phosphate biosynthesis; pyridoxine 5'-phosphate from D-erythrose 4-phosphate: step 5/5. Its function is as follows. Catalyzes the complicated ring closure reaction between the two acyclic compounds 1-deoxy-D-xylulose-5-phosphate (DXP) and 3-amino-2-oxopropyl phosphate (1-amino-acetone-3-phosphate or AAP) to form pyridoxine 5'-phosphate (PNP) and inorganic phosphate. In Vibrio parahaemolyticus serotype O3:K6 (strain RIMD 2210633), this protein is Pyridoxine 5'-phosphate synthase.